Reading from the N-terminus, the 422-residue chain is Probable biofilm formation methyltransferase WspC (422 aa).

The CheR-type methyltransferase domain maps to 1 to 264; it reads MNDRFERLLK…LSFVFRRTSE (264 aa). S-adenosyl-L-methionine contacts are provided by residues Thr67, Arg71, Glu108, Asp132, 186–187, and 205–206; these read NL and RN. Positions 289-316 are disordered; sequence ASIRPSPPPPAKPRQRLSSLVPPASGQP. One copy of the TPR repeat lies at 354 to 387; it reads ATVFYWLGLLSDVAGQEQEAQDFYRKALYLEPQH.

In terms of assembly, monomer.

Involved in biofilm formation. The chain is Probable biofilm formation methyltransferase WspC (wspC) from Pseudomonas aeruginosa (strain ATCC 15692 / DSM 22644 / CIP 104116 / JCM 14847 / LMG 12228 / 1C / PRS 101 / PAO1).